We begin with the raw amino-acid sequence, 91 residues long: uncharacterized protein (91 aa).

The signal sequence occupies residues 1–25 (MLLQRIGIEHLRIWILLLLISLVPA).

This is an uncharacterized protein from Caenorhabditis elegans.